The sequence spans 552 residues: DNA ligase (552 aa).

Glu-244 contributes to the ATP binding site. The N6-AMP-lysine intermediate role is filled by Lys-246. The ATP site is built by Arg-251, Arg-266, Glu-296, Phe-336, Arg-408, and Lys-414.

The protein belongs to the ATP-dependent DNA ligase family. Mg(2+) serves as cofactor.

The enzyme catalyses ATP + (deoxyribonucleotide)n-3'-hydroxyl + 5'-phospho-(deoxyribonucleotide)m = (deoxyribonucleotide)n+m + AMP + diphosphate.. DNA ligase that seals nicks in double-stranded DNA during DNA replication, DNA recombination and DNA repair. The sequence is that of DNA ligase from Methanothrix thermoacetophila (strain DSM 6194 / JCM 14653 / NBRC 101360 / PT) (Methanosaeta thermophila).